The primary structure comprises 826 residues: Ribonucleoside-diphosphate reductase large subunit (826 aa).

Residues threonine 171, 186–187 (SC), glycine 217, 387–391 (NLCAE), and 594–598 (PTSGC) contribute to the substrate site. An intrachain disulfide couples cysteine 187 to cysteine 403. Asparagine 387 acts as the Proton acceptor in catalysis. Cysteine 389 acts as the Cysteine radical intermediate in catalysis. Glutamate 391 functions as the Proton acceptor in the catalytic mechanism. The disordered stretch occupies residues 747–769 (SVPREEQNERSPAEQMPPRPMEP). A compositionally biased stretch (basic and acidic residues) spans 749–758 (PREEQNERSP).

It belongs to the ribonucleoside diphosphate reductase large chain family. In terms of assembly, heterotetramer composed of a homodimer of the large subunit (R1) and a homodimer of the small subunit (R2). Larger multisubunit protein complex are also active, composed of (R1)n(R2)n.

It catalyses the reaction a 2'-deoxyribonucleoside 5'-diphosphate + [thioredoxin]-disulfide + H2O = a ribonucleoside 5'-diphosphate + [thioredoxin]-dithiol. Ribonucleoside-diphosphate reductase holoenzyme provides the precursors necessary for viral DNA synthesis. Allows virus growth in non-dividing cells, as well as reactivation from latency in infected hosts. Catalyzes the biosynthesis of deoxyribonucleotides from the corresponding ribonucleotides. This chain is Ribonucleoside-diphosphate reductase large subunit, found in Homo sapiens (Human).